The chain runs to 361 residues: Chorismate synthase (361 aa).

An NADP(+)-binding site is contributed by Arg48. FMN contacts are provided by residues 126 to 128 (RFS), Gly286, 301 to 305 (KPTPS), and Arg328.

This sequence belongs to the chorismate synthase family. FMNH2 serves as cofactor.

The catalysed reaction is 5-O-(1-carboxyvinyl)-3-phosphoshikimate = chorismate + phosphate. It functions in the pathway metabolic intermediate biosynthesis; chorismate biosynthesis; chorismate from D-erythrose 4-phosphate and phosphoenolpyruvate: step 7/7. Its function is as follows. Catalyzes the anti-1,4-elimination of the C-3 phosphate and the C-6 proR hydrogen from 5-enolpyruvylshikimate-3-phosphate (EPSP) to yield chorismate, which is the branch point compound that serves as the starting substrate for the three terminal pathways of aromatic amino acid biosynthesis. This reaction introduces a second double bond into the aromatic ring system. The sequence is that of Chorismate synthase from Korarchaeum cryptofilum (strain OPF8).